We begin with the raw amino-acid sequence, 201 residues long: Small ribosomal subunit protein uS4 (201 aa).

Residues 91–151 (SRLDNVVYRA…EKSQKMNWFE (61 aa)) enclose the S4 RNA-binding domain.

It belongs to the universal ribosomal protein uS4 family. In terms of assembly, part of the 30S ribosomal subunit. Contacts protein S5. The interaction surface between S4 and S5 is involved in control of translational fidelity.

One of the primary rRNA binding proteins, it binds directly to 16S rRNA where it nucleates assembly of the body of the 30S subunit. In terms of biological role, with S5 and S12 plays an important role in translational accuracy. The polypeptide is Small ribosomal subunit protein uS4 (Corynebacterium glutamicum (strain ATCC 13032 / DSM 20300 / JCM 1318 / BCRC 11384 / CCUG 27702 / LMG 3730 / NBRC 12168 / NCIMB 10025 / NRRL B-2784 / 534)).